We begin with the raw amino-acid sequence, 419 residues long: Probable pectate lyase C (419 aa).

An N-terminal signal peptide occupies residues 1 to 19 (MRLTPSLISCLSLLHFTSA). N-linked (GlcNAc...) asparagine glycans are attached at residues N48, N164, and N201. Residue R204 is part of the active site. Residues 261–296 (NENFHAYVETNYYDSDKDGTLNGSELGVDSTNYGGM) form the EF-hand domain. Residues D274, D276, D278, and T280 each coordinate Ca(2+). Residue N282 is glycosylated (N-linked (GlcNAc...) asparagine). E285 is a binding site for Ca(2+). The interval 352-395 (ISDEADMGGAGDLDQGTTPTDTDGDGIPDDAEAELGTDPNTADS) is disordered. Positions 363-372 (DLDQGTTPTD) are enriched in low complexity. Positions 373 to 386 (TDGDGIPDDAEAEL) are enriched in acidic residues.

The protein belongs to the polysaccharide lyase 1 family. Requires Ca(2+) as cofactor.

The protein localises to the secreted. The catalysed reaction is Eliminative cleavage of (1-&gt;4)-alpha-D-galacturonan to give oligosaccharides with 4-deoxy-alpha-D-galact-4-enuronosyl groups at their non-reducing ends.. Its function is as follows. Pectinolytic enzyme consist of four classes of enzymes: pectin lyase, polygalacturonase, pectin methylesterase and rhamnogalacturonase. Among pectinolytic enzymes, pectin lyase is the most important in depolymerization of pectin, since it cleaves internal glycosidic bonds of highly methylated pectins. Favors pectate, the anion, over pectin, the methyl ester. The chain is Probable pectate lyase C (plyC) from Aspergillus oryzae (strain ATCC 42149 / RIB 40) (Yellow koji mold).